We begin with the raw amino-acid sequence, 1944 residues long: MEPSKFHSTVLARPPGMYDEDDDHRRRQRDILNPPAPSQTGPGSGGSSSAGGPRPPFSLRSPTQSEFHHQSSQHHYSASSAASGPQSTYNGANNGVPQSHSHSRSNSHSRHSSSSVLHSPYQQASTASRPAHALDLHRSPQTSGLQAPQRSPGLHAPSVYYSQESREHHPPPPKPIDKPASSGRSFYDPLTDTTTTSTSDRERRTSDAGSSWHNATTNAVSTPTHRDAYNSYSKPAANPSPYYGNGKYTSPSASIYPPRSPASHPQSVATAAAEPISPPTRPPRMATPNILNPTTTSSMAAMSQAESPAQKAAVPAATPSRAAELMSFSNILSSSEPAPKPRPRSPVLAETPNKQPEPEPEREPTKEPSKEPSKEPSKEPSKEPSPPPADMDETSDSPACPEKPAEVDAETEPDAEIHDDVDTVDGLEESEKPEPPIKREKSAKVEKAPRRPRVVEKEKKERVTKAPRKSAGAKGRASEVKAESTPKQSRRSSGKQEALSSSRVPAKRQANGLTKQKAQALEQEKAVVAEMEQLEEEALDESEARAELRAFKKRKLNRQKALETTDLSVATELLPSLKDEAINRHHRRHDFSAEMVLKLGVHVALGRLRFGDHNYDAALKEVREQELFAEKERKKDMQRKRRREKSMAVTIEQKEAALAKAHATEDKLERQKLLREAERANKKAQQTKLILQKGIKGPARNIMPMDVNLEGGSMATFSADSMEPGKGKGKGRAGNRPKKSKEQKQAEKEAAEAAQAALDAGQELPSKEENPKIRIKVNKGKLSKDKDRDVDVDTIDGDNTEIKDTEEPPPKKKGKVVEEVKDTLETRFQSKGYNQIYDQIWRDMARKDVSKVYRLATDSYYTKASNLKKTAILAAKEAKRWQLRTNKGMKDLQARGKRVMRDMMTFWKRNEREERDLRKAAERQELENARKEEADREAARQKRKLNFLISQTELYSHFIGKKIKTDEVERSTDRPEVAAEEQKNKPAGENALTVKEPTGPVGAKVTNFENLDFDAEDDETLQAAAMANAQNAIAEAQRKARNFNNDDEPDEDGEMNFQNPTGLGDVEIEQPKLLTATLKEYQLKGLNWLVNLYEQGINGILADEMGLGKTIQSISVMAYLAEHHDIWGPFLVVAPASTLHNWEQEIKRFVPDLKIVPYWGSASDRKILRKFWDRKHSTYKRDAQFHVAITSYQMVVSDVAYFQKMKWQYMILDEAQAIKSSQSSRWKCLLSFHCRNRLLLTGTPIQNNMQELWALLHFIMPSLFDSHEEFSDWFSKDIESHAQSNSKLNEDQLKRLHMILKPFMLRRVKKHVQKELGDKIELDVYCDLTYRQRAYYANLRNQISIMDLIEKATLGDDNDSGTLMNLVMQFRKVCNHPDLFERADTSSPLALVRFAETGSFAREGNDVTVGYTTRSVVEYILPRLLWRDGGRLTKAGSDNPSAGFRSRYLGEMMNIWSSTNIRESVDGTDNFSFLRFADTSIAEAEKVGKTDLFARASELAQRRNRLANMHVSYDDDEEDNFTPAHALFLIRQRQDRTALSEITSEGALQNLMNVSHVMYEDANLPRMDQAARPGASAPPIEVVCHTSSTQIERDRVLFNVPMRKALFGPNLDEQKEFVLQKVPVEQLPPAPLLPKPDNERQRFTSITVPSMRQFITNSGKLAKLDELLFKLKAGGHRVLLYFQMTRMIDLMEEYLTYRNWKYCRLDGSTKFEDRRDTVHDFQTNPSIFVFLLSTRAGGLGINLTSADTVIFYDSDWNPTIDSQAMDRAHRLGQTRQVTVYRLITRGTIEERIRKRAMQKEEVQRVVITGGAGASSGVDFSGRRAPENRNRDIAMWLADDDQAELIERRERELLESGELDKVAKKRGGGKRKKVAKDMGDGGGVSLDEMYHEGEGNFDDNKLSGAATPNVPDSTDAKPGKKKKATGKKAKTTKQRLAIADGQMDM.

Positions 1 to 518 (MEPSKFHSTV…QANGLTKQKA (518 aa)) are disordered. The segment covering 73–83 (QHHYSASSAAS) has biased composition (low complexity). Positions 84-98 (GPQSTYNGANNGVPQ) are enriched in polar residues. The span at 101 to 111 (SHSRSNSHSRH) shows a compositional bias: basic residues. Composition is skewed to polar residues over residues 139–149 (SPQTSGLQAPQ), 208–223 (AGSS…VSTP), and 289–307 (NILN…QAES). Low complexity predominate over residues 312 to 323 (AAVPAATPSRAA). Polar residues predominate over residues 327-336 (SFSNILSSSE). Basic and acidic residues-rich tracts occupy residues 356–382 (PEPE…EPSK) and 429–464 (ESEK…ERVT). 2 coiled-coil regions span residues 506 to 563 (AKRQ…KALE) and 624 to 696 (EQEL…KGIK). Positions 715 to 815 (ATFSADSMEP…EEPPPKKKGK (101 aa)) are disordered. The segment covering 727–739 (GKGKGRAGNRPKK) has biased composition (basic residues). Composition is skewed to basic and acidic residues over residues 740–751 (SKEQKQAEKEAA), 782–791 (LSKDKDRDVD), and 800–815 (TEIK…KKGK). One can recognise a DBINO domain in the interval 840 to 965 (IWRDMARKDV…SHFIGKKIKT (126 aa)). A coiled-coil region spans residues 908–953 (KRNEREERDLRKAAERQELENARKEEADREAARQKRKLNFLISQTE). Residues 966–986 (DEVERSTDRPEVAAEEQKNKP) are compositionally biased toward basic and acidic residues. A disordered region spans residues 966–1003 (DEVERSTDRPEVAAEEQKNKPAGENALTVKEPTGPVGA). The 173-residue stretch at 1090 to 1262 (VNLYEQGING…WALLHFIMPS (173 aa)) folds into the Helicase ATP-binding domain. 1103-1110 (DEMGLGKT) provides a ligand contact to ATP. A DEAQ box motif is present at residues 1213 to 1216 (DEAQ). Residues 1663–1818 (KLDELLFKLK…GGAGASSGVD (156 aa)) form the Helicase C-terminal domain. Residues 1862–1873 (AKKRGGGKRKKV) show a composition bias toward basic residues. The segment at 1862-1944 (AKKRGGGKRK…LAIADGQMDM (83 aa)) is disordered. The span at 1887 to 1900 (EMYHEGEGNFDDNK) shows a compositional bias: basic and acidic residues. The span at 1918-1932 (GKKKKATGKKAKTTK) shows a compositional bias: basic residues.

It belongs to the SNF2/RAD54 helicase family. Component of the INO80 chromatin-remodeling complex.

It is found in the nucleus. It catalyses the reaction ATP + H2O = ADP + phosphate + H(+). Its function is as follows. ATPase component of the INO80 complex which remodels chromatin by shifting nucleosomes and is involved in DNA repair. This is Chromatin-remodeling ATPase INO80 (INO80) from Pyricularia oryzae (strain 70-15 / ATCC MYA-4617 / FGSC 8958) (Rice blast fungus).